A 539-amino-acid polypeptide reads, in one-letter code: Serine/threonine-protein kinase 35 (539 aa).

The interval 103–161 is disordered; the sequence is ITIQGPAPPHLGARRRDEARGARAAPLLLPPPPAAMETGKENGARRGTKSPERKRRSPV. Residues 148 to 160 show a composition bias toward basic residues; it reads RGTKSPERKRRSP. The 329-residue stretch at 207-535 folds into the Protein kinase domain; it reads YSLLAEIGRG…FELETRMDQV (329 aa). ATP contacts are provided by residues 213-221 and K236; that span reads IGRGSYGVV. D365 functions as the Proton acceptor in the catalytic mechanism.

Belongs to the protein kinase superfamily. Ser/Thr protein kinase family. In terms of assembly, interacts with PDLIM1/CLP-36. Post-translationally, autophosphorylated.

Its subcellular location is the nucleus. The protein localises to the nucleolus. The protein resides in the cytoplasm. It carries out the reaction L-seryl-[protein] + ATP = O-phospho-L-seryl-[protein] + ADP + H(+). The catalysed reaction is L-threonyl-[protein] + ATP = O-phospho-L-threonyl-[protein] + ADP + H(+). The chain is Serine/threonine-protein kinase 35 (Stk35) from Mus musculus (Mouse).